We begin with the raw amino-acid sequence, 273 residues long: Probable glycerophosphodiester phosphodiesterase GpdQ (273 aa).

Asp-8, His-10, Asp-50, Asn-80, His-154, His-194, and His-196 together coordinate Fe cation.

Belongs to the cyclic nucleotide phosphodiesterase class-III family. Fe(2+) serves as cofactor.

It catalyses the reaction a sn-glycero-3-phosphodiester + H2O = an alcohol + sn-glycerol 3-phosphate + H(+). The enzyme catalyses sn-glycero-3-phosphoethanolamine + H2O = ethanolamine + sn-glycerol 3-phosphate + H(+). Its function is as follows. Catalyzes the hydrolysis of the 3'-5' phosphodiester bond of glycerophosphodiesters such as glycerophosphorylethanolamine (GPE), a typical phospholipid metabolite. This Arcobacter nitrofigilis (strain ATCC 33309 / DSM 7299 / CCUG 15893 / LMG 7604 / NCTC 12251 / CI) (Campylobacter nitrofigilis) protein is Probable glycerophosphodiester phosphodiesterase GpdQ.